A 262-amino-acid chain; its full sequence is Electron transfer flavoprotein beta subunit lysine methyltransferase (262 aa).

A mitochondrion-targeting transit peptide spans 1–38 (MALSLGWKAHRNHCGLLLQALRSSGLLLFPCGQCPWRG).

This sequence belongs to the methyltransferase superfamily. ETFBKMT family. As to quaternary structure, interacts with HSPD1; this protein may possibly be a methylation substrate.

It is found in the cytoplasm. The protein resides in the mitochondrion matrix. The enzyme catalyses L-lysyl-[protein] + 3 S-adenosyl-L-methionine = N(6),N(6),N(6)-trimethyl-L-lysyl-[protein] + 3 S-adenosyl-L-homocysteine + 3 H(+). Protein-lysine methyltransferase that selectively trimethylates the flavoprotein ETFB in mitochondria. Thereby, may negatively regulate the function of ETFB in electron transfer from Acyl-CoA dehydrogenases to the main respiratory chain. The polypeptide is Electron transfer flavoprotein beta subunit lysine methyltransferase (Homo sapiens (Human)).